The chain runs to 424 residues: GTPase Obg (424 aa).

An Obg domain is found at 1 to 158 (MFVDKARIFV…RWISLELKLL (158 aa)). Positions 159–331 (ADVGLIGFPN…LLKECARVLS (173 aa)) constitute an OBG-type G domain. GTP-binding positions include 165 to 172 (GFPNVGKS), 190 to 194 (FTTIT), 212 to 215 (DIPG), 282 to 285 (NKAD), and 312 to 314 (SAA). Residues Ser-172 and Thr-192 each contribute to the Mg(2+) site. Positions 345–424 (RFVPEDKHFT…LNDFEFEFLK (80 aa)) constitute an OCT domain.

Belongs to the TRAFAC class OBG-HflX-like GTPase superfamily. OBG GTPase family. Monomer. Mg(2+) is required as a cofactor.

The protein resides in the cytoplasm. Functionally, an essential GTPase which binds GTP, GDP and possibly (p)ppGpp with moderate affinity, with high nucleotide exchange rates and a fairly low GTP hydrolysis rate. Plays a role in control of the cell cycle, stress response, ribosome biogenesis and in those bacteria that undergo differentiation, in morphogenesis control. The protein is GTPase Obg of Clostridium acetobutylicum (strain ATCC 824 / DSM 792 / JCM 1419 / IAM 19013 / LMG 5710 / NBRC 13948 / NRRL B-527 / VKM B-1787 / 2291 / W).